We begin with the raw amino-acid sequence, 1337 residues long: Partitioning defective 3 homolog (1337 aa).

Position 25 is a phosphoserine (S25). Disordered stretches follow at residues 81–109 and 143–263; these read EQDP…SELG and SSDP…LENM. T91 carries the phosphothreonine modification. Over residues 91 to 100 the composition is skewed to low complexity; sequence TSASSTGTQS. Polar residues-rich tracts occupy residues 150 to 163 and 171 to 188; these read GLST…FSSE and TRWS…TGSP. S156 and S174 each carry phosphoserine. Basic and acidic residues predominate over residues 190 to 203; that stretch reads TCDRKKDENYRSLP. Residues 207–224 are compositionally biased toward polar residues; that stretch reads SSWSNQFQRDNARSSLSA. The PDZ 1 domain maps to 271–359; it reads MVKLVQVPND…ARVIWFHVVP (89 aa). S383 bears the Phosphoserine mark. Residues 397–441 are disordered; the sequence is NAPQALPRAPRLSQPPEQLDAHPRLPHSAHASTKPPTAPALAPPN. PDZ domains are found at residues 461–546 and 590–677; these read NIQL…LVFR and EVPL…GMIQ. Position 489 is a phosphotyrosine (Y489). 6 positions are modified to phosphoserine: S692, S695, S715, S728, S809, and S827. An interaction with PRKCI and PRKCZ region spans residues 712–936; sequence RRISHSLYSG…AAIDKSYDKP (225 aa). K834 carries the N6-acetyllysine modification. S837 carries the phosphoserine modification. K851 is subject to N6-acetyllysine. Phosphoserine is present on residues S852 and S873. Disordered stretches follow at residues 866 to 888, 932 to 1015, 1028 to 1055, 1110 to 1271, and 1284 to 1337; these read VDDQ…KKSS, SYDK…AKKG, KHRK…DRVR, LNAR…LGGH, and LLRQ…PFYS. K885 bears the N6-acetyllysine mark. Residues 935-1337 are interaction with FRMD4A; the sequence is KPMVDDDDEG…TPEKGRPFYS (403 aa). The span at 939 to 953 shows a compositional bias: acidic residues; sequence DDDDEGMETLEEDTE. S962 bears the Phosphoserine; by AURKA mark. 2 positions are modified to phosphoserine: S971 and S973. Composition is skewed to basic and acidic residues over residues 981-1009 and 1030-1043; these read DPEK…EKDK and RKDD…RIKI. Position 1046 is a phosphoserine (S1046). The stretch at 1050 to 1082 forms a coiled coil; it reads EEDRVRMKEEQERIQAKTREFRERQARERDYAE. The span at 1138–1147 shows a compositional bias: polar residues; it reads PGDSNRSTPS. Positions 1148–1175 are enriched in basic and acidic residues; sequence NHDRIQRLRQEFQQAKQDEDVEDRRRTY. Coiled coils occupy residues 1149–1172, 1199–1222, and 1278–1299; these read HDRI…EDRR, VQVQ…YSSL, and MLET…LKKQ. Residues 1180–1203 show a composition bias toward low complexity; it reads SWSSSRPASQSGRHSVSVEVQVQR. The segment covering 1219 to 1240 has biased composition (polar residues); that stretch reads YSSLPRQSRKNASSVSQDSWEQ. Basic and acidic residues predominate over residues 1284–1296; sequence LLRQEQRRKEQQL. A compositionally biased stretch (polar residues) spans 1318–1327; it reads SQVARLNRLQ. Positions 1328–1337 are enriched in basic and acidic residues; sequence TPEKGRPFYS. K1331 carries the N6-acetyllysine modification.

Belongs to the PAR3 family. In terms of assembly, component of a complex whose core is composed of ARHGAP17, AMOT, PALS1, PATJ and PARD3/PAR3. Interacts (via PDZ 1 domain) with PARD6A, PARD6B and F11R/JAM1. Interacts with AURKA, AURKB and SIRT2. Interacts with PRKCI. Interacts with PRKCZ. Part of a complex with PARD6A or PARD6B, PRKCI or PRKCZ and CDC42 or RAC1. Interacts with LIMK2 and CDH5. Component of the Par polarity complex, composed of at least phosphorylated PRKCZ, PARD3 and TIAM1. Directly interacts with TIAM1 and TIAM2. Interacts with ECT2 and FBF1. Interacts (via PDZ 3 domain) with PTEN (via C-terminus). Interacts (via coiled-coil domain) with FRMD4A. Found in a complex with PARD3, CYTH1 and FRMD4A. Interacts with SAPCD2. Interacts with PRKCA. Interacts with PRKCZ. In terms of processing, acetylated. Deacetylated by SIRT2, thereby inhibiting Schwann cell peripheral myelination. Phosphorylation at Ser-827 by PRKCZ and PRKCI occurs at the most apical tip of epithelial cell-cell contacts during the initial phase of tight junction formation and may promote dissociation of the complex with PARD6. EGF-induced Tyr-1127 phosphorylation mediates dissociation from LIMK2. Phosphorylation by AURKA at Ser-962 is required for the normal establishment of neuronal polarity. Isoform 1 is predominantly expressed in lung, glandular stomach, prostate, ovary and uterus. Isoform 1 is also expressed in brain, with a high expression in the cortex, hippocampus and in the striatum. Isoform 2 is predominantly expressed in intestinal epithelial cells, kidney and prostate.

The protein resides in the cytoplasm. The protein localises to the endomembrane system. Its subcellular location is the cell junction. It localises to the tight junction. It is found in the adherens junction. The protein resides in the cell cortex. The protein localises to the cytoskeleton. Its subcellular location is the cell membrane. In terms of biological role, adapter protein involved in asymmetrical cell division and cell polarization processes. Seems to play a central role in the formation of epithelial tight junctions. Association with PARD6B may prevent the interaction of PARD3 with F11R/JAM1, thereby preventing tight junction assembly. The PARD6-PARD3 complex links GTP-bound Rho small GTPases to atypical protein kinase C proteins. Required for establishment of neuronal polarity and normal axon formation in cultured hippocampal neurons. Involved in Schwann cell peripheral myelination. Targets the phosphatase PTEN to cell junctions. In Rattus norvegicus (Rat), this protein is Partitioning defective 3 homolog (Pard3).